Consider the following 959-residue polypeptide: MKEMMGVVGIILVVSSCCLSLLDAQEITHPTDVSALQYVHRKLKDPLNHLQDWKKTDPCASNWTGVICIPDPSDGFLHVKELRLLNMNLTGQLAPELGLLSNLTILNFMWNDLTGQIPPELGNLTHLIFLLLSGNQLTGSLPQELGSLSNLLILQIDYNEISGKLPTSLANLKKLKHFHMNNNSITGQIPPEYSTLTNVLHFLMDNNKLTGNLPPELAQMPSLRILQLDGSNFDGTEIPSSYGSIPNLVKLSLRNCNLEGPIPDLSKSLVLYYLDISSNKLTGEIPKNKFSANITTINLYNNLLSGSIPSNFSGLPRLQRLQVQNNNLSGEIPVIWENRILKAEEKLILDLRNNMFSNVSSVLLNPPSNVTVKLYGNPVCANVNAGKLADLCGISTLEVESPATSSETISTGDCKRQSCPVSENYDYVIGSPVACFCAAPLGIDLRLRSPSFSDFRPYKVSYMLDVASPKNLGINPYQISIDTFAWQSGPRLFMNMKIFPEYSELNSKFNSTEVQRIVDFFATFTLNTDDSLGPYEIISINTGAYKDVTIIFPKKSGMSIGVSVGIIIGAIAFFLVLSSLALVFFIKRSKRKRKTREVDMEQEHPLPKPPMNMESVKGYNFTELDSATSSFSDLSQIGRGGYGKVYKGHLPGGLVVAVKRAEQGSLQGQKEFFTEIELLSRLHHRNLVSLLGYCDQKGEQMLVYEYMPNGSLQDALSARFRQPLSLALRLRIALGSARGILYLHTEADPPIIHRDIKPSNILLDSKMNPKVADFGISKLIALDGGGVQRDHVTTIVKGTPGYVDPEYYLSHRLTEKSDVYSLGIVFLEILTGMRPISHGRNIVREVNEACDAGMMMSVIDRSMGQYSEECVKRFMELAIRCCQDNPEARPWMLEIVRELENIYGLIPKEEKPYSSPSVQSSASGMSGFAVASPRSSYTTFSEFTANQLVSGVIPSIAPR.

Positions 1 to 24 (MKEMMGVVGIILVVSSCCLSLLDA) are cleaved as a signal peptide. Residues 25–565 (QEITHPTDVS…SGMSIGVSVG (541 aa)) lie on the Extracellular side of the membrane. Asn62, Asn88, Asn102, and Asn123 each carry an N-linked (GlcNAc...) asparagine glycan. LRR repeat units lie at residues 79–100 (VKEL…LGLL), 101–124 (SNLT…LGNL), 125–148 (THLI…LGSL), 149–172 (SNLL…LANL), 173–198 (KKLK…TLTN), 200–220 (LHFL…LAQM), 221–244 (PSLR…SYGS), 246–268 (PNLV…LSKS), and 269–292 (LVLY…KFSA). Residue Asn182 is glycosylated (N-linked (GlcNAc...) asparagine). N-linked (GlcNAc...) asparagine glycans are attached at residues Asn293, Asn311, Asn327, Asn358, Asn369, and Asn510. LRR repeat units lie at residues 294–314 (ITTI…NFSG), 315–338 (LPRL…IWEN), and 341–366 (LKAE…LLNP). Residues 566-586 (IIIGAIAFFLVLSSLALVFFI) form a helical membrane-spanning segment. The Cytoplasmic segment spans residues 587 to 959 (KRSKRKRKTR…SGVIPSIAPR (373 aa)). The 276-residue stretch at 631–906 (FSDLSQIGRG…RELENIYGLI (276 aa)) folds into the Protein kinase domain. ATP-binding positions include 637–645 (IGRGGYGKV) and Lys659. The Proton acceptor role is filled by Asp755.

It belongs to the protein kinase superfamily. Ser/Thr protein kinase family.

The protein localises to the membrane. The enzyme catalyses L-seryl-[protein] + ATP = O-phospho-L-seryl-[protein] + ADP + H(+). The catalysed reaction is L-threonyl-[protein] + ATP = O-phospho-L-threonyl-[protein] + ADP + H(+). This chain is Probable LRR receptor-like serine/threonine-protein kinase At5g37450, found in Arabidopsis thaliana (Mouse-ear cress).